The sequence spans 384 residues: GDP/UDP-N,N'-diacetylbacillosamine 2-epimerase (hydrolyzing) (384 aa).

The protein belongs to the UDP-N-acetylglucosamine 2-epimerase family.

The enzyme catalyses GDP-N,N'-diacetylbacillosamine + H2O = 2,4-diacetamido-2,4,6-trideoxy-alpha-D-mannopyranose + GDP + H(+). It carries out the reaction UDP-N,N'-diacetylbacillosamine + H2O = 2,4-diacetamido-2,4,6-trideoxy-alpha-D-mannopyranose + UDP + H(+). Its function is as follows. Involved in biosynthesis of legionaminic acid (5,7-diamino-3,5,7,9-tetradeoxy-D-glycero-D-galacto-non-2-ulosonic acid)(Leg), a sialic acid-like derivative that is incorporated into flagellin via O-linkage to Ser/Thr. Catalyzes the conversion of GDP-N,N'-diacetylbacillosamine (Bac2Ac4Ac) into 2,4-diacetamido-2,4,6-trideoxymannose and GDP. It can also use UDP-N,N'-diacetylbacillosamine however it generates small quantities of 2,4-diacetamido-2,4,6-trideoxymannose. The sequence is that of GDP/UDP-N,N'-diacetylbacillosamine 2-epimerase (hydrolyzing) (legG) from Campylobacter jejuni subsp. jejuni serotype O:2 (strain ATCC 700819 / NCTC 11168).